Reading from the N-terminus, the 731-residue chain is 1,4-alpha-glucan branching enzyme GlgB (731 aa).

Residue Asp408 is the Nucleophile of the active site. Glu461 acts as the Proton donor in catalysis.

The protein belongs to the glycosyl hydrolase 13 family. GlgB subfamily. In terms of assembly, monomer.

The catalysed reaction is Transfers a segment of a (1-&gt;4)-alpha-D-glucan chain to a primary hydroxy group in a similar glucan chain.. The protein operates within glycan biosynthesis; glycogen biosynthesis. Functionally, catalyzes the formation of the alpha-1,6-glucosidic linkages in glycogen by scission of a 1,4-alpha-linked oligosaccharide from growing alpha-1,4-glucan chains and the subsequent attachment of the oligosaccharide to the alpha-1,6 position. This is 1,4-alpha-glucan branching enzyme GlgB from Corynebacterium efficiens (strain DSM 44549 / YS-314 / AJ 12310 / JCM 11189 / NBRC 100395).